The primary structure comprises 925 residues: Serine/threonine-protein kinase SIK2 (925 aa).

A Protein kinase domain is found at 20–271 (YDIEGTLGKG…IAQIKEHKWM (252 aa)). A Phosphothreonine modification is found at Thr25. ATP contacts are provided by residues 26–34 (LGKGNFAVV) and Lys49. Lys53 carries the post-translational modification N6-acetyllysine; by EP300. The active-site Proton acceptor is Asp142. The residue at position 175 (Thr175) is a Phosphothreonine. The region spanning 295–335 (EFNEQVLRLMHSLGIDQQKTIESLQNKSYNHFAAIYFLLVE) is the UBA domain. At Ser534 the chain carries Phosphoserine. Residues 564 to 586 (ALSSQKREVHNRSPVSFREGRRA) are disordered. Ser587 is subject to Phosphoserine. 3 disordered regions span residues 630–674 (PNLA…PRQS), 742–776 (SSYP…PLSP), and 800–895 (QPLP…SSYD). 2 stretches are compositionally biased toward low complexity: residues 648–659 (QEEVSQQQESVS) and 742–756 (SSYP…LPRQ). Residues 765 to 774 (APPFSLTQPL) are compositionally biased toward polar residues. Residues 808-820 (PRAAPLPTQLQQQ) are compositionally biased toward low complexity. The segment covering 821–833 (QPPPPPPPPPPRQ) has biased composition (pro residues).

The protein belongs to the protein kinase superfamily. CAMK Ser/Thr protein kinase family. SNF1 subfamily. As to quaternary structure, interacts with and phosphorylates TORC2/CRTC2. It depends on Mg(2+) as a cofactor. In terms of processing, phosphorylated at Thr-175 by STK11/LKB1 in complex with STE20-related adapter-alpha (STRADA) pseudo kinase and CAB39. Phosphorylated at Thr-484 in response to insulin in adipocytes. Post-translationally, acetylation at Lys-53 inhibits kinase activity. Deacetylated by HDAC6.

The protein resides in the cytoplasm. It localises to the endoplasmic reticulum membrane. The catalysed reaction is L-seryl-[protein] + ATP = O-phospho-L-seryl-[protein] + ADP + H(+). It carries out the reaction L-threonyl-[protein] + ATP = O-phospho-L-threonyl-[protein] + ADP + H(+). Its activity is regulated as follows. Activated by phosphorylation on Thr-175. Its function is as follows. Serine/threonine-protein kinase that plays a role in many biological processes such as fatty acid oxidation, autophagy, immune response or glucose metabolism. Phosphorylates 'Ser-794' of IRS1 in insulin-stimulated adipocytes, potentially modulating the efficiency of insulin signal transduction. Inhibits CREB activity by phosphorylating and repressing TORCs, the CREB-specific coactivators. Phosphorylates EP300 and thus inhibits its histone acetyltransferase activity. In turn, regulates the DNA-binding ability of several transcription factors such as PPARA or MLXIPL. Also plays a role in thymic T-cell development. This is Serine/threonine-protein kinase SIK2 (SIK2) from Pongo abelii (Sumatran orangutan).